Reading from the N-terminus, the 260-residue chain is Proteasome subunit alpha (260 aa).

Belongs to the peptidase T1A family. As to quaternary structure, the 20S proteasome core is composed of 14 alpha and 14 beta subunits that assemble into four stacked heptameric rings, resulting in a barrel-shaped structure. The two inner rings, each composed of seven catalytic beta subunits, are sandwiched by two outer rings, each composed of seven alpha subunits. The catalytic chamber with the active sites is on the inside of the barrel. Has a gated structure, the ends of the cylinder being occluded by the N-termini of the alpha-subunits. Is capped at one or both ends by the proteasome regulatory ATPase, PAN.

It is found in the cytoplasm. With respect to regulation, the formation of the proteasomal ATPase PAN-20S proteasome complex, via the docking of the C-termini of PAN into the intersubunit pockets in the alpha-rings, triggers opening of the gate for substrate entry. Interconversion between the open-gate and close-gate conformations leads to a dynamic regulation of the 20S proteasome proteolysis activity. In terms of biological role, component of the proteasome core, a large protease complex with broad specificity involved in protein degradation. This chain is Proteasome subunit alpha, found in Thermococcus kodakarensis (strain ATCC BAA-918 / JCM 12380 / KOD1) (Pyrococcus kodakaraensis (strain KOD1)).